Consider the following 364-residue polypeptide: Lysophosphatidic acid receptor 1 (364 aa).

At Met1–Lys50 the chain is on the extracellular side. 2 disulfides stabilise this stretch: Cys24–Cys190 and Cys188–Cys195. Asn27 and Asn35 each carry an N-linked (GlcNAc...) asparagine glycan. Lys39 is an a 1-acyl-sn-glycero-3-phosphate binding site. Residues Leu51–Tyr75 traverse the membrane as a helical segment. The Cytoplasmic segment spans residues Val76–Pro83. A helical transmembrane segment spans residues Ile84–Phe107. Residues Asn108 to Trp121 are Extracellular-facing. Residues Leu122–Ile144 form a helical membrane-spanning segment. Arg124–Asp129 is an a 1-acyl-sn-glycero-3-phosphate binding site. Residues Glu145–Arg163 are Cytoplasmic-facing. A helical transmembrane segment spans residues Val164–Val184. Over Gly185–Asp204 the chain is Extracellular. The chain crosses the membrane as a helical span at residues Ser205 to Tyr225. Trp210 is an a 1-acyl-sn-glycero-3-phosphate binding site. At Ala226–Ser255 the chain is on the cytoplasmic side. The helical transmembrane segment at Leu256–Leu280 threads the bilayer. Topologically, residues Asp281–Lys294 are extracellular. Residues Cys284 and Cys287 are joined by a disulfide bond. Residues Phe295–Asp315 traverse the membrane as a helical segment. Over Lys316 to Val364 the chain is Cytoplasmic. Ser341 bears the Phosphoserine mark. Phosphothreonine is present on Thr351.

Belongs to the G-protein coupled receptor 1 family. Interacts with RALA and GRK2. Interacts with GNAQ and GNA13. Interacts with CD14; the interaction is enhanced by exposure to bacterial lipopolysaccharide (LPS). N-glycosylated. In terms of tissue distribution, detected in lung. Detected in oligodendrocytes in corpus callosum in brain cortex (at protein level). Expressed within the embryonic cerebral cortex, where it is enriched in the ventricular zone. In the adult brain, also expressed in oligodendrocytes, as well as Schwann cells of the peripheral nervous system. Expressed in many other tissues, including lung, heart, intestine, spleen, thymus, and stomach. No expression in liver. Detected in kidney and testis. Detected in embryonic fibroblasts. Detected in adult lung fibroblasts and lung endothelial cells. Detected in dorsal root ganglion and dorsal root. Detected in astrocytes. Detected in bone.

The protein resides in the cell surface. It is found in the cell membrane. The protein localises to the endosome. Functionally, receptor for lysophosphatidic acid (LPA). Plays a role in the reorganization of the actin cytoskeleton, cell migration, differentiation and proliferation, and thereby contributes to the responses to tissue damage and infectious agents. Activates downstream signaling cascades via the G(i)/G(o), G(12)/G(13), and G(q) families of heteromeric G proteins. Signaling inhibits adenylyl cyclase activity and decreases cellular cAMP levels. Signaling triggers an increase of cytoplasmic Ca(2+) levels. Activates RALA; this leads to the activation of phospholipase C (PLC) and the formation of inositol 1,4,5-trisphosphate. Signaling mediates activation of down-stream MAP kinases. Contributes to the regulation of cell shape. Promotes Rho-dependent reorganization of the actin cytoskeleton in neuronal cells and neurite retraction. Promotes the activation of Rho and the formation of actin stress fibers. Promotes formation of lamellipodia at the leading edge of migrating cells via activation of RAC1. Through its function as LPA receptor, plays a role in chemotaxis and cell migration, including responses to injury and wounding. Plays a role in triggering inflammation in response to bacterial lipopolysaccharide (LPS) via its interaction with CD14. Promotes cell proliferation in response to LPA. Inhibits the intracellular ciliogenesis pathway in response to LPA and through AKT1 activation. Required for normal skeleton development. May play a role in osteoblast differentiation. Required for normal brain development. Required for normal proliferation, survival and maturation of newly formed neurons in the adult dentate gyrus. Plays a role in pain perception and in the initiation of neuropathic pain. The protein is Lysophosphatidic acid receptor 1 (Lpar1) of Mus musculus (Mouse).